The primary structure comprises 753 residues: Photosystem I P700 chlorophyll a apoprotein A1 (753 aa).

The next 8 membrane-spanning stretches (helical) occupy residues isoleucine 72 to alanine 95, leucine 158 to histidine 181, methionine 197 to leucine 221, threonine 293 to tyrosine 311, tryptophan 350 to tyrosine 373, leucine 389 to valine 415, alanine 437 to histidine 459, and phenylalanine 534 to leucine 552. Cysteine 576 and cysteine 585 together coordinate [4Fe-4S] cluster. 2 helical membrane-spanning segments follow: residues histidine 592 to tryptophan 613 and leucine 667 to phenylalanine 689. Chlorophyll a' is bound at residue histidine 678. The chlorophyll a site is built by methionine 686 and tyrosine 694. Residue tryptophan 695 coordinates phylloquinone. A helical membrane pass occupies residues alanine 727–alanine 747.

Belongs to the PsaA/PsaB family. As to quaternary structure, the PsaA/B heterodimer binds the P700 chlorophyll special pair and subsequent electron acceptors. PSI consists of a core antenna complex that captures photons, and an electron transfer chain that converts photonic excitation into a charge separation. The cyanobacterial PSI reaction center is composed of one copy each of PsaA,B,C,D,E,F,I,J,K,L,M and X, and forms trimeric complexes. PSI electron transfer chain: 5 chlorophyll a, 1 chlorophyll a', 2 phylloquinones and 3 4Fe-4S clusters. PSI core antenna: 90 chlorophyll a, 22 carotenoids, 3 phospholipids and 1 galactolipid. P700 is a chlorophyll a/chlorophyll a' dimer, A0 is one or more chlorophyll a, A1 is one or both phylloquinones and FX is a shared 4Fe-4S iron-sulfur center. serves as cofactor.

It localises to the cellular thylakoid membrane. The catalysed reaction is reduced [plastocyanin] + hnu + oxidized [2Fe-2S]-[ferredoxin] = oxidized [plastocyanin] + reduced [2Fe-2S]-[ferredoxin]. Its function is as follows. PsaA and PsaB bind P700, the primary electron donor of photosystem I (PSI), as well as the electron acceptors A0, A1 and FX. PSI is a plastocyanin/cytochrome c6-ferredoxin oxidoreductase, converting photonic excitation into a charge separation, which transfers an electron from the donor P700 chlorophyll pair to the spectroscopically characterized acceptors A0, A1, FX, FA and FB in turn. Oxidized P700 is reduced on the lumenal side of the thylakoid membrane by plastocyanin or cytochrome c6. The protein is Photosystem I P700 chlorophyll a apoprotein A1 of Trichodesmium erythraeum (strain IMS101).